We begin with the raw amino-acid sequence, 217 residues long: Small ribosomal subunit protein eS6 (217 aa).

This sequence belongs to the eukaryotic ribosomal protein eS6 family. In terms of processing, phosphorylated.

This Encephalitozoon cuniculi (strain GB-M1) (Microsporidian parasite) protein is Small ribosomal subunit protein eS6 (RPS6).